The sequence spans 307 residues: Potassium channel subfamily K member 7 (307 aa).

Residues 1–10 (MGSLKPWARY) lie on the Cytoplasmic side of the membrane. Residues 11–31 (LLLLMAHLLAMGLGAVVLQAL) form a helical membrane-spanning segment. N-linked (GlcNAc...) asparagine glycosylation is present at Asn-83. An intramembrane region (pore-forming) is located at residues 92–118 (LPSALLFTASILTTTGYGHMAPLSSGG). A helical transmembrane segment spans residues 120–140 (AFCVVYAALGLPASLALVAAL). Topologically, residues 141–172 (RHCLLPVFSRPGDWVAIRWQLAPAQAALLQAA) are cytoplasmic. Residues 173 to 193 (GLGLLVACVFMLLPALVLWGV) form a helical membrane-spanning segment. Positions 199 to 227 (LLEAIYFCFGSLSTIGLGDLLPAHGRGLH) form an intramembrane region, pore-forming. Residues 233–253 (LGQFALLGYLLLGLLAMLLAV) form a helical membrane-spanning segment. Residues 254 to 307 (ETFSELPQVRAMVKFFGPSGSRTDEDQDGILGQDELALSTVLPDAPVLGPTTPA) lie on the Cytoplasmic side of the membrane.

This sequence belongs to the two pore domain potassium channel (TC 1.A.1.8) family. As to quaternary structure, homodimer. In terms of tissue distribution, detected in embryo, eye, lung and liver. Weakly expressed in colon, testis, atria, kidney, intestine, bladder, uterus, ovary, salivary gland, thymus and brain stem. Not detected in brain, cerebellum, spinal cord, heart, ventricle, skeletal muscle, liver, placenta and pancreas. In the eye, highly expressed in the retinal ganglion cell layer and inner nuclear layer.

It is found in the membrane. Its function is as follows. Probable potassium channel subunit. No channel activity observed in vitro as protein remains in the endoplasmic reticulum. May need to associate with an as yet unknown partner in order to reach the plasma membrane. This chain is Potassium channel subfamily K member 7 (Kcnk7), found in Mus musculus (Mouse).